Consider the following 459-residue polypeptide: Putrescine aminotransferase (459 aa).

Residues 150–151 (GT) and Gln274 contribute to the pyridoxal 5'-phosphate site. N6-(pyridoxal phosphate)lysine is present on Lys300. Thr332 contributes to the pyridoxal 5'-phosphate binding site.

The protein belongs to the class-III pyridoxal-phosphate-dependent aminotransferase family. Putrescine aminotransferase subfamily. Pyridoxal 5'-phosphate is required as a cofactor.

It carries out the reaction an alkane-alpha,omega-diamine + 2-oxoglutarate = an omega-aminoaldehyde + L-glutamate. It catalyses the reaction putrescine + 2-oxoglutarate = 1-pyrroline + L-glutamate + H2O. The catalysed reaction is cadaverine + 2-oxoglutarate = 5-aminopentanal + L-glutamate. The protein operates within amine and polyamine degradation; putrescine degradation; 4-aminobutanal from putrescine (transaminase route): step 1/1. Its function is as follows. Catalyzes the aminotransferase reaction from putrescine to 2-oxoglutarate, leading to glutamate and 4-aminobutanal, which spontaneously cyclizes to form 1-pyrroline. This is the first step in one of two pathways for putrescine degradation, where putrescine is converted into 4-aminobutanoate (gamma-aminobutyrate or GABA) via 4-aminobutanal. Also functions as a cadaverine transaminase in a a L-lysine degradation pathway to succinate that proceeds via cadaverine, glutarate and L-2-hydroxyglutarate. This chain is Putrescine aminotransferase, found in Salmonella paratyphi B (strain ATCC BAA-1250 / SPB7).